Here is a 271-residue protein sequence, read N- to C-terminus: Phosphonoacetaldehyde hydrolase (271 aa).

The Nucleophile role is filled by Asp12. Mg(2+) is bound by residues Asp12 and Ala14. Lys54 serves as the catalytic Schiff-base intermediate with substrate. Asp188 serves as a coordination point for Mg(2+).

The protein belongs to the HAD-like hydrolase superfamily. PhnX family. In terms of assembly, homodimer. Requires Mg(2+) as cofactor.

The catalysed reaction is phosphonoacetaldehyde + H2O = acetaldehyde + phosphate + H(+). Its function is as follows. Involved in phosphonate degradation. The polypeptide is Phosphonoacetaldehyde hydrolase (Vibrio cholerae serotype O1 (strain ATCC 39541 / Classical Ogawa 395 / O395)).